Consider the following 326-residue polypeptide: Archaeal actin homolog (326 aa).

ATP is bound by residues 10–14 (YGDTK), Ser179, Gln231, 285–288 (GGSN), and Gln311.

This sequence belongs to the thermophilic archaeal actin family.

Its function is as follows. Polymerizes into bundles of filaments, forming a helix with a filament width of 5.5 nm and an axial repeating unit of 5.5 nm. Polymerization of Ta0583 requires NTP and is optimal with ATP, but GTP, UTP, CTP, and even the deoxy form of NTP can also support the polymerization reaction. Nucleoside diphosphate or AMP-PNP does not support polymerization. This is Archaeal actin homolog from Thermoplasma acidophilum (strain ATCC 25905 / DSM 1728 / JCM 9062 / NBRC 15155 / AMRC-C165).